The following is a 106-amino-acid chain: Biogenesis of lysosome-related organelles complex 1 subunit 4 (106 aa).

A coiled-coil region spans residues 53-106 (THSEGLSEQLKMTEKNILEMENLFDQIDQLCLFVQKAKSDLDKLEKLYNVVDRQ).

Belongs to the BLOC1S4 family. As to quaternary structure, component of the biogenesis of lysosome-related organelles complex-1 (BLOC-1) composed at least of blos-1, blos-2, blos-4, dsbn-1, glo-2, mutd-1 and snpn-1. Interacts with glo-2.

Functionally, component of the biogenesis of lysosome-related organelles complex-1 (BLOC-1) involved in gut granule biogenesis. The polypeptide is Biogenesis of lysosome-related organelles complex 1 subunit 4 (blos-4) (Caenorhabditis elegans).